The following is a 377-amino-acid chain: Alkane 1-monooxygenase 2 (377 aa).

The next 4 helical transmembrane spans lie at 17 to 37 (GYWI…WSLG), 43 to 63 (AWPW…DAIV), 87 to 107 (VLSL…GWIL), and 116 to 136 (VGQL…GITV). Histidine 138, histidine 142, histidine 168, histidine 172, and histidine 173 together coordinate Fe cation. The chain crosses the membrane as a helical span at residues 236–256 (ALFLLGFSLAFGWLGAIFFLG). Histidine 312, histidine 315, and histidine 316 together coordinate Fe cation.

The protein belongs to the fatty acid desaturase type 1 family. AlkB subfamily. Fe(3+) serves as cofactor.

Its subcellular location is the cell inner membrane. The catalysed reaction is octane + 2 reduced [rubredoxin] + O2 + 2 H(+) = 2 oxidized [rubredoxin] + octan-1-ol + H2O. Its pathway is hydrocarbon metabolism; alkane degradation. Its function is as follows. Catalyzes the hydroxylation of n-alkanes in the presence of a NADH-rubredoxin reductase and rubredoxin. It preferably hydroxylases C12-C20 hydrocarbons. This is Alkane 1-monooxygenase 2 (alkB2) from Pseudomonas aeruginosa (strain ATCC 15692 / DSM 22644 / CIP 104116 / JCM 14847 / LMG 12228 / 1C / PRS 101 / PAO1).